The chain runs to 734 residues: Polyribonucleotide nucleotidyltransferase (734 aa).

Residues D497 and D503 each coordinate Mg(2+). The KH domain maps to P564–I623. The S1 motif domain maps to G633–K707. The tract at residues G700 to R734 is disordered. A compositionally biased stretch (basic and acidic residues) spans A717–R734.

Belongs to the polyribonucleotide nucleotidyltransferase family. Mg(2+) is required as a cofactor.

Its subcellular location is the cytoplasm. The enzyme catalyses RNA(n+1) + phosphate = RNA(n) + a ribonucleoside 5'-diphosphate. Functionally, involved in mRNA degradation. Catalyzes the phosphorolysis of single-stranded polyribonucleotides processively in the 3'- to 5'-direction. This chain is Polyribonucleotide nucleotidyltransferase, found in Pelotomaculum thermopropionicum (strain DSM 13744 / JCM 10971 / SI).